We begin with the raw amino-acid sequence, 159 residues long: 2-C-methyl-D-erythritol 2,4-cyclodiphosphate synthase (159 aa).

Asp-8 and His-10 together coordinate a divalent metal cation. 4-CDP-2-C-methyl-D-erythritol 2-phosphate is bound by residues Asp-8–His-10 and His-34–Ser-35. His-42 serves as a coordination point for a divalent metal cation. 4-CDP-2-C-methyl-D-erythritol 2-phosphate-binding positions include Asp-56–Gly-58, Phe-61–Asp-65, Ala-100–Leu-106, Thr-132–Glu-135, Phe-139, and Arg-142.

This sequence belongs to the IspF family. In terms of assembly, homotrimer. The cofactor is a divalent metal cation.

The enzyme catalyses 4-CDP-2-C-methyl-D-erythritol 2-phosphate = 2-C-methyl-D-erythritol 2,4-cyclic diphosphate + CMP. The protein operates within isoprenoid biosynthesis; isopentenyl diphosphate biosynthesis via DXP pathway; isopentenyl diphosphate from 1-deoxy-D-xylulose 5-phosphate: step 4/6. Functionally, involved in the biosynthesis of isopentenyl diphosphate (IPP) and dimethylallyl diphosphate (DMAPP), two major building blocks of isoprenoid compounds. Catalyzes the conversion of 4-diphosphocytidyl-2-C-methyl-D-erythritol 2-phosphate (CDP-ME2P) to 2-C-methyl-D-erythritol 2,4-cyclodiphosphate (ME-CPP) with a corresponding release of cytidine 5-monophosphate (CMP). This is 2-C-methyl-D-erythritol 2,4-cyclodiphosphate synthase from Escherichia coli O81 (strain ED1a).